Here is a 581-residue protein sequence, read N- to C-terminus: Threonine--tRNA ligase (581 aa).

Residues 185 to 478 (DHRKLGKELD…LVEHYGGAFP (294 aa)) are catalytic. Positions 278, 329, and 455 each coordinate Zn(2+).

It belongs to the class-II aminoacyl-tRNA synthetase family. Homodimer. Zn(2+) serves as cofactor.

The protein resides in the cytoplasm. It catalyses the reaction tRNA(Thr) + L-threonine + ATP = L-threonyl-tRNA(Thr) + AMP + diphosphate + H(+). Its function is as follows. Catalyzes the attachment of threonine to tRNA(Thr) in a two-step reaction: L-threonine is first activated by ATP to form Thr-AMP and then transferred to the acceptor end of tRNA(Thr). Also edits incorrectly charged L-seryl-tRNA(Thr). This Borreliella burgdorferi (strain ATCC 35210 / DSM 4680 / CIP 102532 / B31) (Borrelia burgdorferi) protein is Threonine--tRNA ligase.